The primary structure comprises 544 residues: Chaperonin GroEL (544 aa).

ATP is bound by residues Thr-29 to Pro-32, Asp-86 to Thr-90, Gly-413, Asn-476 to Ala-478, and Asp-492.

This sequence belongs to the chaperonin (HSP60) family. Forms a cylinder of 14 subunits composed of two heptameric rings stacked back-to-back. Interacts with the co-chaperonin GroES.

The protein resides in the cytoplasm. It catalyses the reaction ATP + H2O + a folded polypeptide = ADP + phosphate + an unfolded polypeptide.. Functionally, together with its co-chaperonin GroES, plays an essential role in assisting protein folding. The GroEL-GroES system forms a nano-cage that allows encapsulation of the non-native substrate proteins and provides a physical environment optimized to promote and accelerate protein folding. This Bacillus licheniformis (strain ATCC 14580 / DSM 13 / JCM 2505 / CCUG 7422 / NBRC 12200 / NCIMB 9375 / NCTC 10341 / NRRL NRS-1264 / Gibson 46) protein is Chaperonin GroEL.